A 104-amino-acid chain; its full sequence is Large ribosomal subunit protein bL21c (104 aa).

This sequence belongs to the bacterial ribosomal protein bL21 family. In terms of assembly, part of the 50S ribosomal subunit.

Its subcellular location is the plastid. The protein resides in the cyanelle. Functionally, this protein binds to 23S rRNA. The sequence is that of Large ribosomal subunit protein bL21c from Cyanophora paradoxa.